The chain runs to 407 residues: Arginine biosynthesis bifunctional protein ArgJ (407 aa).

Substrate-binding residues include Thr-154, Lys-180, Thr-191, Glu-278, Asn-402, and Ser-407. Thr-191 acts as the Nucleophile in catalysis.

This sequence belongs to the ArgJ family. Heterotetramer of two alpha and two beta chains.

The protein resides in the cytoplasm. The catalysed reaction is N(2)-acetyl-L-ornithine + L-glutamate = N-acetyl-L-glutamate + L-ornithine. The enzyme catalyses L-glutamate + acetyl-CoA = N-acetyl-L-glutamate + CoA + H(+). It participates in amino-acid biosynthesis; L-arginine biosynthesis; L-ornithine and N-acetyl-L-glutamate from L-glutamate and N(2)-acetyl-L-ornithine (cyclic): step 1/1. Its pathway is amino-acid biosynthesis; L-arginine biosynthesis; N(2)-acetyl-L-ornithine from L-glutamate: step 1/4. In terms of biological role, catalyzes two activities which are involved in the cyclic version of arginine biosynthesis: the synthesis of N-acetylglutamate from glutamate and acetyl-CoA as the acetyl donor, and of ornithine by transacetylation between N(2)-acetylornithine and glutamate. In Psychrobacter arcticus (strain DSM 17307 / VKM B-2377 / 273-4), this protein is Arginine biosynthesis bifunctional protein ArgJ.